The primary structure comprises 309 residues: Putative pyridoxal kinase C6F6.11c (309 aa).

Substrate-binding residues include Ser-12 and Tyr-123. Residues 182-183 (SS) and 209-221 (LIPV…RGTG) each bind ATP. Asp-222 is a substrate binding site.

Belongs to the pyridoxine kinase family. A divalent metal cation is required as a cofactor.

The protein localises to the cytoplasm. Its subcellular location is the nucleus. It catalyses the reaction pyridoxal + ATP = pyridoxal 5'-phosphate + ADP + H(+). Required for synthesis of pyridoxal-5-phosphate from vitamin B6. In Schizosaccharomyces pombe (strain 972 / ATCC 24843) (Fission yeast), this protein is Putative pyridoxal kinase C6F6.11c.